Here is a 286-residue protein sequence, read N- to C-terminus: Phosphatidylserine decarboxylase proenzyme (286 aa).

Residues Asp-90, His-147, and Ser-252 each act as charge relay system; for autoendoproteolytic cleavage activity in the active site. The Schiff-base intermediate with substrate; via pyruvic acid; for decarboxylase activity role is filled by Ser-252. A Pyruvic acid (Ser); by autocatalysis modification is found at Ser-252.

Belongs to the phosphatidylserine decarboxylase family. PSD-B subfamily. Prokaryotic type I sub-subfamily. As to quaternary structure, heterodimer of a large membrane-associated beta subunit and a small pyruvoyl-containing alpha subunit. The cofactor is pyruvate. Is synthesized initially as an inactive proenzyme. Formation of the active enzyme involves a self-maturation process in which the active site pyruvoyl group is generated from an internal serine residue via an autocatalytic post-translational modification. Two non-identical subunits are generated from the proenzyme in this reaction, and the pyruvate is formed at the N-terminus of the alpha chain, which is derived from the carboxyl end of the proenzyme. The autoendoproteolytic cleavage occurs by a canonical serine protease mechanism, in which the side chain hydroxyl group of the serine supplies its oxygen atom to form the C-terminus of the beta chain, while the remainder of the serine residue undergoes an oxidative deamination to produce ammonia and the pyruvoyl prosthetic group on the alpha chain. During this reaction, the Ser that is part of the protease active site of the proenzyme becomes the pyruvoyl prosthetic group, which constitutes an essential element of the active site of the mature decarboxylase.

The protein resides in the cell membrane. The catalysed reaction is a 1,2-diacyl-sn-glycero-3-phospho-L-serine + H(+) = a 1,2-diacyl-sn-glycero-3-phosphoethanolamine + CO2. It functions in the pathway phospholipid metabolism; phosphatidylethanolamine biosynthesis; phosphatidylethanolamine from CDP-diacylglycerol: step 2/2. Its function is as follows. Catalyzes the formation of phosphatidylethanolamine (PtdEtn) from phosphatidylserine (PtdSer). In Azotobacter vinelandii (strain DJ / ATCC BAA-1303), this protein is Phosphatidylserine decarboxylase proenzyme.